The following is a 576-amino-acid chain: MDIKLLYRLAKYLRCYKKDLIIVMISLLSVSASLLLIGSVFRNLVDKGLSKDHISSVDNSILYICLLIIILSIASFFRSYFINNVAEKAVNQIRKEAYSNLINYEIEEFEELKIGDIISRLTNDIDQISTLIVNFLSFFIRNSVMLIGSITLMFFESFKLASIVIITIPILLIPLIKFGKHVKVLSKKALESKSLLASDINETFNNIRAIYAFNHQINKIADFDTKLQNYLIYCKTRLKIRALFFAISIAVIFLAITLVVWIGASDIVKGHLSAGQIISFIYYAIIAGVSCGGIFELLSEMHLPVTALERIITIIDKTPIAHNNYLELNNSDPISIEFKNVDFTYHSRPNLRIINNMSLKINANKFLGIVGRSGAGKSTVIQLLLRFYRQENGTILINNQDITLLNPAEIRKLIAYVPQEASIFSGTIKSNIIFGNNEASDDEINEIIKITGIEEFAAKLHDGINAKIGERGVRLSGGQKQRIAIARALLRMPQILLLDEAMSALDTMSEQKLLESIKKIMRGNIIISIAHRISSIESADYILVIDKGGVVAEGSHNDLSKNSEIYRNICREQLTI.

The ABC transmembrane type-1 domain maps to 20 to 303; that stretch reads LIIVMISLLS…IFELLSEMHL (284 aa). Transmembrane regions (helical) follow at residues 21-41, 57-77, 135-155, 158-178, 242-262, and 277-297; these read IIVMISLLSVSASLLLIGSVF, VDNSILYICLLIIILSIASFF, FLSFFIRNSVMLIGSITLMFF, FKLASIVIITIPILLIPLIKF, ALFFAISIAVIFLAITLVVWI, and IISFIYYAIIAGVSCGGIFEL. Residues 336–572 enclose the ABC transporter domain; sequence IEFKNVDFTY…SEIYRNICRE (237 aa). 371–378 serves as a coordination point for ATP; it reads GRSGAGKS.

Belongs to the ABC transporter superfamily. Homodimer.

It localises to the cell inner membrane. In terms of biological role, part of an ABC transporter complex. Transmembrane domains (TMD) form a pore in the inner membrane and the ATP-binding domain (NBD) is responsible for energy generation. The protein is Putative export ATP-binding/permease protein RC1073 of Rickettsia conorii (strain ATCC VR-613 / Malish 7).